A 216-amino-acid polypeptide reads, in one-letter code: Probable flavin-dependent thymidylate synthase (216 aa).

In terms of domain architecture, ThyX spans 1-216 (MSAKLISVTK…PSIAKALDWV (216 aa)). FAD contacts are provided by residues serine 55, 78 to 80 (RHR), and glutamate 86. DUMP-binding positions include 75–78 (QVLR), 86–90 (EFSQR), and arginine 155. The ThyX motif signature appears at 78–88 (RHRSFHFQEFS). Histidine 177 provides a ligand contact to FAD. Arginine 182 is a dUMP binding site. The Involved in ionization of N3 of dUMP, leading to its activation role is filled by arginine 182.

This sequence belongs to the thymidylate synthase ThyX family. Homotetramer. FAD serves as cofactor.

The enzyme catalyses dUMP + (6R)-5,10-methylene-5,6,7,8-tetrahydrofolate + NADPH + H(+) = dTMP + (6S)-5,6,7,8-tetrahydrofolate + NADP(+). It functions in the pathway pyrimidine metabolism; dTTP biosynthesis. Its function is as follows. Catalyzes the reductive methylation of 2'-deoxyuridine-5'-monophosphate (dUMP) to 2'-deoxythymidine-5'-monophosphate (dTMP) while utilizing 5,10-methylenetetrahydrofolate (mTHF) as the methyl donor, and NADPH and FADH(2) as the reductant. This Paramecium bursaria Chlorella virus 1 (PBCV-1) protein is Probable flavin-dependent thymidylate synthase.